The primary structure comprises 824 residues: Disintegrin and metalloproteinase domain-containing protein 8 (824 aa).

A signal peptide spans 1-16 (MRGLGLWLLGAMMLPA). Residues 17–655 (IAPSRPWALM…EVHAASGSLP (639 aa)) lie on the Extracellular side of the membrane. N-linked (GlcNAc...) asparagine glycosylation is found at Asn67 and Asn91. The region spanning 200-400 (RYVELYVVVD…PQSVCLANAP (201 aa)) is the Peptidase M12B domain. Intrachain disulfides connect Cys310–Cys395, Cys351–Cys379, Cys353–Cys362, Cys435–Cys457, Cys448–Cys454, Cys466–Cys486, Cys473–Cys503, Cys498–Cys508, Cys566–Cys613, Cys613–Cys623, Cys617–Cys629, and Cys631–Cys640. His334 serves as a coordination point for Zn(2+). Glu335 is a catalytic residue. Residues His338 and His344 each coordinate Zn(2+). The 87-residue stretch at 408-494 (GPVCGNLFVE…ECPEDAFQEN (87 aa)) folds into the Disintegrin domain. Asn436 carries N-linked (GlcNAc...) asparagine glycosylation. An EGF-like domain is found at 609–641 (RSSNCSAQCHNHGVCNHKQECHCHAGWAPPHCA). Asn612 carries N-linked (GlcNAc...) asparagine glycosylation. Residues 656–676 (VFVVVVLVLLAVVLVTLAGII) form a helical membrane-spanning segment. Topologically, residues 677–824 (VYRKARSRIL…KQGAGAPTAP (148 aa)) are cytoplasmic. Disordered regions lie at residues 710-756 (VPAK…PVTV) and 776-824 (KPTF…PTAP). Residues 747 to 756 (RPPPAPPVTV) show a composition bias toward pro residues. Positions 788–804 (PGAGAANPGPAEGAVGP) are enriched in low complexity.

In terms of assembly, interacts with FST3. Requires Zn(2+) as cofactor. In terms of tissue distribution, expressed on neutrophils and monocytes.

It is found in the membrane. In terms of biological role, possible involvement in extravasation of leukocytes. The protein is Disintegrin and metalloproteinase domain-containing protein 8 (ADAM8) of Homo sapiens (Human).